We begin with the raw amino-acid sequence, 586 residues long: Serine/threonine-protein phosphatase 2A 56 kDa regulatory subunit delta isoform (586 aa).

A disordered region spans residues 1-80 (MSPSPSSSGK…QSSSRFNLSK (80 aa)). Repeat copies occupy residues 21–22 (QP), 23–24 (QP), 25–26 (QP), 27–28 (QP), 29–30 (QP), and 31–32 (QP). The 8 X 2 AA approximate tandem repeats of Q-P stretch occupies residues 21–36 (QPQPQPQPQPQPQSQP). Residues 23–35 (QPQPQPQPQPQSQ) show a composition bias toward pro residues. Residues 33 to 34 (QS) form a 7; approximate repeat. Repeat unit 8 spans residues 35-36 (QP). Over residues 36–45 (PPSSNKRPSN) the composition is skewed to low complexity. Thr47 carries the post-translational modification Phosphothreonine. 3 positions are modified to phosphoserine: Ser72, Ser73, and Ser74. Positions 507–514 (RAPPPLPP) match the SH3-binding; class I motif. A Nuclear localization signal motif is present at residues 532–549 (KRTVETEAVQMLKDIKKE). A phosphoserine mark is found at Ser557 and Ser582.

This sequence belongs to the phosphatase 2A regulatory subunit B56 family. In terms of assembly, PP2A consists of a common heterodimeric core enzyme, composed of a 36 kDa catalytic subunit (subunit C) and a 65 kDa constant regulatory subunit (PR65 or subunit A), that associates with a variety of regulatory subunits. Proteins that associate with the core dimer include three families of regulatory subunits B (the R2/B/PR55/B55, R3/B''/PR72/PR130/PR59 and R5/B'/B56 families), the 48 kDa variable regulatory subunit, viral proteins, and cell signaling molecules. Interacts with the PP2A A subunit PPP2R1A. Interacts with SGO1. Interacts with ADCY8. As to expression, highly expressed in brain.

It localises to the nucleus. In terms of biological role, the B regulatory subunit might modulate substrate selectivity and catalytic activity, and might also direct the localization of the catalytic enzyme to a particular subcellular compartment. This Oryctolagus cuniculus (Rabbit) protein is Serine/threonine-protein phosphatase 2A 56 kDa regulatory subunit delta isoform (PPP2R5D).